The following is an 871-amino-acid chain: DNA mismatch repair protein MutS (871 aa).

Position 605–612 (605–612 (GPNMGGKS)) interacts with ATP. The segment at 791 to 840 (PQRPTSASVEQPVDSAKTETAATAEEPQQLSLFPTDEETKPKQPTKKERS) is disordered. Positions 827–840 (EETKPKQPTKKERS) are enriched in basic and acidic residues.

This sequence belongs to the DNA mismatch repair MutS family.

Functionally, this protein is involved in the repair of mismatches in DNA. It is possible that it carries out the mismatch recognition step. This protein has a weak ATPase activity. This is DNA mismatch repair protein MutS from Shouchella clausii (strain KSM-K16) (Alkalihalobacillus clausii).